A 301-amino-acid polypeptide reads, in one-letter code: Tyrosine recombinase XerD (301 aa).

The region spanning P6–K89 is the Core-binding (CB) domain. A Tyr recombinase domain is found at R108 to H293. Catalysis depends on residues R152, K174, H245, R248, and H271. Y280 (O-(3'-phospho-DNA)-tyrosine intermediate) is an active-site residue.

Belongs to the 'phage' integrase family. XerD subfamily. In terms of assembly, forms a cyclic heterotetrameric complex composed of two molecules of XerC and two molecules of XerD.

The protein localises to the cytoplasm. In terms of biological role, site-specific tyrosine recombinase, which acts by catalyzing the cutting and rejoining of the recombining DNA molecules. The XerC-XerD complex is essential to convert dimers of the bacterial chromosome into monomers to permit their segregation at cell division. It also contributes to the segregational stability of plasmids. The chain is Tyrosine recombinase XerD from Chlamydia muridarum (strain MoPn / Nigg).